The following is a 368-amino-acid chain: Glutamate 5-kinase (368 aa).

Residue Lys-18 coordinates ATP. Ser-58, Asp-145, and Asn-157 together coordinate substrate. ATP is bound by residues Ser-177–Asp-178 and Thr-218–Lys-224. Positions Ala-280–Pro-358 constitute a PUA domain.

It belongs to the glutamate 5-kinase family.

Its subcellular location is the cytoplasm. It catalyses the reaction L-glutamate + ATP = L-glutamyl 5-phosphate + ADP. It participates in amino-acid biosynthesis; L-proline biosynthesis; L-glutamate 5-semialdehyde from L-glutamate: step 1/2. Its function is as follows. Catalyzes the transfer of a phosphate group to glutamate to form L-glutamate 5-phosphate. The sequence is that of Glutamate 5-kinase from Mycobacterium ulcerans (strain Agy99).